Here is an 878-residue protein sequence, read N- to C-terminus: Probable LRR receptor-like serine/threonine-protein kinase MEE39 (878 aa).

The first 25 residues, 1–25 (MKNLCWVFLSLFWFGVFLIIRFAEG), serve as a signal peptide directing secretion. Over 26-514 (QNQEGFISLD…IDKPKKKVAV (489 aa)) the chain is Extracellular. Asn-183, Asn-203, Asn-235, Asn-290, Asn-404, Asn-418, Asn-445, and Asn-466 each carry an N-linked (GlcNAc...) asparagine glycan. LRR repeat units lie at residues 413-436 (RIIS…QNLA), 437-458 (HLES…FLAT), and 461-483 (SLLV…LRDR). A helical transmembrane segment spans residues 515–535 (KVVAPVASIAAIVVVILLFVF). Residues 536-878 (KKKMSSRNKP…FDTDVKPKAR (343 aa)) are Cytoplasmic-facing. Thr-557 is subject to Phosphothreonine. The 275-residue stretch at 566–840 (KNLQRPLGEG…QVIINLKECL (275 aa)) folds into the Protein kinase domain. Residues 572–580 (LGEGGFGVV) and Lys-594 contribute to the ATP site. Residue Tyr-639 is modified to Phosphotyrosine. Asp-691 acts as the Proton acceptor in catalysis. A Phosphoserine modification is found at Ser-726. A phosphothreonine mark is found at Thr-727 and Thr-732. Tyr-740 bears the Phosphotyrosine mark. Positions 849-869 (RNNQNMDSGHSSDQLNVTVTF) are enriched in polar residues. A disordered region spans residues 849-878 (RNNQNMDSGHSSDQLNVTVTFDTDVKPKAR).

The protein belongs to the protein kinase superfamily. Ser/Thr protein kinase family.

Its subcellular location is the membrane. The enzyme catalyses L-seryl-[protein] + ATP = O-phospho-L-seryl-[protein] + ADP + H(+). It carries out the reaction L-threonyl-[protein] + ATP = O-phospho-L-threonyl-[protein] + ADP + H(+). In terms of biological role, receptor-like serine/threonine-kinase required during the endosperm development in seeds. This chain is Probable LRR receptor-like serine/threonine-protein kinase MEE39 (MEE39), found in Arabidopsis thaliana (Mouse-ear cress).